A 362-amino-acid chain; its full sequence is Aspartate carbamoyltransferase catalytic subunit (362 aa).

The segment at 1–22 (MPKTAMTDSTSKTSTNTASSDM) is disordered. The segment covering 7-20 (TDSTSKTSTNTASS) has biased composition (low complexity). Residues arginine 100 and threonine 101 each contribute to the carbamoyl phosphate site. Lysine 128 is a binding site for L-aspartate. Residues arginine 150, histidine 180, and glutamine 183 each contribute to the carbamoyl phosphate site. Residues arginine 214 and arginine 269 each coordinate L-aspartate. Carbamoyl phosphate-binding residues include glycine 310 and proline 311.

This sequence belongs to the aspartate/ornithine carbamoyltransferase superfamily. ATCase family. In terms of assembly, heterododecamer (2C3:3R2) of six catalytic PyrB chains organized as two trimers (C3), and six regulatory PyrI chains organized as three dimers (R2).

It catalyses the reaction carbamoyl phosphate + L-aspartate = N-carbamoyl-L-aspartate + phosphate + H(+). It functions in the pathway pyrimidine metabolism; UMP biosynthesis via de novo pathway; (S)-dihydroorotate from bicarbonate: step 2/3. Functionally, catalyzes the condensation of carbamoyl phosphate and aspartate to form carbamoyl aspartate and inorganic phosphate, the committed step in the de novo pyrimidine nucleotide biosynthesis pathway. The sequence is that of Aspartate carbamoyltransferase catalytic subunit from Psychrobacter sp. (strain PRwf-1).